Consider the following 216-residue polypeptide: Small ribosomal subunit protein uS5 (216 aa).

Residues 1-55 are disordered; that stretch reads MDKKLENQKDLLNQDPKVELNSQSVAKNPLNSREVKPIQRRRPLRKNARDKNSKP. Residues 20 to 31 are compositionally biased toward polar residues; the sequence is LNSQSVAKNPLN. Positions 57–120 constitute an S5 DRBM domain; that stretch reads FEERVIAIHR…KDAQNRLVSV (64 aa).

This sequence belongs to the universal ribosomal protein uS5 family. Part of the 30S ribosomal subunit. Contacts proteins S4 and S8.

Functionally, with S4 and S12 plays an important role in translational accuracy. Located at the back of the 30S subunit body where it stabilizes the conformation of the head with respect to the body. This Mesomycoplasma hyopneumoniae (strain 7448) (Mycoplasma hyopneumoniae) protein is Small ribosomal subunit protein uS5.